The sequence spans 88 residues: Small ribosomal subunit protein bS20 (88 aa).

This sequence belongs to the bacterial ribosomal protein bS20 family.

In terms of biological role, binds directly to 16S ribosomal RNA. The protein is Small ribosomal subunit protein bS20 of Renibacterium salmoninarum (strain ATCC 33209 / DSM 20767 / JCM 11484 / NBRC 15589 / NCIMB 2235).